Here is a 133-residue protein sequence, read N- to C-terminus: MNVGDLKSANDLYESVRSIEGVTGVHLFRIRDAGILKSTMIPELDALTTISLDELNKSPTVFTKNLLQGCGGTDLDVPAELKRLVIFVCNILESCNEFTDLGSARLLRLTFDSCQLVIMYDSLFVVAITKDET.

It is found in the cytoplasm. The protein localises to the nucleus. Has a role in meiosis. This chain is Meiotically up-regulated gene 15 protein (mug15), found in Schizosaccharomyces pombe (strain 972 / ATCC 24843) (Fission yeast).